Consider the following 351-residue polypeptide: Protein-glutamate methylesterase/protein-glutamine glutaminase 2 (351 aa).

Residues K4 to L121 form the Response regulatory domain. D55 carries the 4-aspartylphosphate modification. Residues R156 to V348 form the CheB-type methylesterase domain. Residues S168, H194, and D290 contribute to the active site.

It belongs to the CheB family. In terms of processing, phosphorylated by CheA. Phosphorylation of the N-terminal regulatory domain activates the methylesterase activity.

It is found in the cytoplasm. The catalysed reaction is [protein]-L-glutamate 5-O-methyl ester + H2O = L-glutamyl-[protein] + methanol + H(+). It catalyses the reaction L-glutaminyl-[protein] + H2O = L-glutamyl-[protein] + NH4(+). Its function is as follows. Involved in chemotaxis. Part of a chemotaxis signal transduction system that modulates chemotaxis in response to various stimuli. Catalyzes the demethylation of specific methylglutamate residues introduced into the chemoreceptors (methyl-accepting chemotaxis proteins or MCP) by CheR. Also mediates the irreversible deamidation of specific glutamine residues to glutamic acid. The chain is Protein-glutamate methylesterase/protein-glutamine glutaminase 2 from Shewanella oneidensis (strain ATCC 700550 / JCM 31522 / CIP 106686 / LMG 19005 / NCIMB 14063 / MR-1).